A 471-amino-acid polypeptide reads, in one-letter code: MTDLPDSTRWQLWIVAFGFFMQSLDTTIVNTALPSMAQSLGESPLHMHMVIVSYVLTVAVMLPASGWLADKVGVRNIFFTAIVLFTLGSLFCALSGTLNELLLARALQGVGGAMMVPVGRLTVMKIVPREQYMAAMTFVTLPGQVGPLLGPALGGLLVEYASWHWIFLINIPVGIIGAIATLMLMPNYTMQTRRFDLSGFLLLAVGMAVLTLALDGSKGTGLSPLAITGLVAVGVVALVLYLLHARNNNRALFSLKLFRTRTFSLGLAGSFAGRIGSGMLPFMTPVFLQIGLGFSPFHAGLMMIPMVLGSMGMKRIVVQVVNRFGYRRVLVATTLGLSLVTLLFMTTALLGWYYVLPFVLFLQGMVNSTRFSSMNTLTLKDLPDNLASSGNSLLSMIMQLSMSIGVTIAGLLLGLFGSQHVSVDSSTTQTVFMYTWLSMAFIIALPAFIFARVPNDTHQNVAISRRKRSAQ.

Residues 1–11 are Periplasmic-facing; sequence MTDLPDSTRWQ. A helical membrane pass occupies residues 12-32; it reads LWIVAFGFFMQSLDTTIVNTA. Residues 33-48 are Cytoplasmic-facing; that stretch reads LPSMAQSLGESPLHMH. The helical transmembrane segment at 49-69 threads the bilayer; it reads MVIVSYVLTVAVMLPASGWLA. The Periplasmic segment spans residues 70–76; sequence DKVGVRN. Residues 77-97 traverse the membrane as a helical segment; it reads IFFTAIVLFTLGSLFCALSGT. At 98-101 the chain is on the cytoplasmic side; it reads LNEL. A helical membrane pass occupies residues 102-124; sequence LLARALQGVGGAMMVPVGRLTVM. Residues 125–137 lie on the Periplasmic side of the membrane; the sequence is KIVPREQYMAAMT. A helical membrane pass occupies residues 138-158; the sequence is FVTLPGQVGPLLGPALGGLLV. At 159–164 the chain is on the cytoplasmic side; that stretch reads EYASWH. Residues 165–185 traverse the membrane as a helical segment; that stretch reads WIFLINIPVGIIGAIATLMLM. The Periplasmic portion of the chain corresponds to 186 to 196; that stretch reads PNYTMQTRRFD. Residues 197–217 form a helical membrane-spanning segment; sequence LSGFLLLAVGMAVLTLALDGS. The Cytoplasmic portion of the chain corresponds to 218–224; that stretch reads KGTGLSP. A helical transmembrane segment spans residues 225–245; sequence LAITGLVAVGVVALVLYLLHA. The Periplasmic portion of the chain corresponds to 246–262; that stretch reads RNNNRALFSLKLFRTRT. The chain crosses the membrane as a helical span at residues 263–283; the sequence is FSLGLAGSFAGRIGSGMLPFM. The Cytoplasmic portion of the chain corresponds to 284–285; sequence TP. A helical transmembrane segment spans residues 286–306; sequence VFLQIGLGFSPFHAGLMMIPM. Residues 307 to 341 lie on the Periplasmic side of the membrane; sequence VLGSMGMKRIVVQVVNRFGYRRVLVATTLGLSLVT. A helical transmembrane segment spans residues 342-362; that stretch reads LLFMTTALLGWYYVLPFVLFL. Topologically, residues 363 to 395 are cytoplasmic; the sequence is QGMVNSTRFSSMNTLTLKDLPDNLASSGNSLLS. The chain crosses the membrane as a helical span at residues 396–416; that stretch reads MIMQLSMSIGVTIAGLLLGLF. The Periplasmic portion of the chain corresponds to 417 to 430; it reads GSQHVSVDSSTTQT. Residues 431–451 traverse the membrane as a helical segment; that stretch reads VFMYTWLSMAFIIALPAFIFA. Residues 452 to 471 lie on the Cytoplasmic side of the membrane; the sequence is RVPNDTHQNVAISRRKRSAQ.

It belongs to the major facilitator superfamily. TCR/Tet family.

It localises to the cell inner membrane. This chain is Putative multidrug resistance protein MdtD, found in Escherichia coli O157:H7.